We begin with the raw amino-acid sequence, 67 residues long: Large ribosomal subunit protein bL31 (67 aa).

Belongs to the bacterial ribosomal protein bL31 family. Type A subfamily. In terms of assembly, part of the 50S ribosomal subunit.

Binds the 23S rRNA. The sequence is that of Large ribosomal subunit protein bL31 from Wolinella succinogenes (strain ATCC 29543 / DSM 1740 / CCUG 13145 / JCM 31913 / LMG 7466 / NCTC 11488 / FDC 602W) (Vibrio succinogenes).